Consider the following 302-residue polypeptide: Probable 2-(5''-triphosphoribosyl)-3'-dephosphocoenzyme-A synthase (302 aa).

This sequence belongs to the CitG/MdcB family.

The catalysed reaction is 3'-dephospho-CoA + ATP = 2'-(5''-triphospho-alpha-D-ribosyl)-3'-dephospho-CoA + adenine. In Salmonella gallinarum (strain 287/91 / NCTC 13346), this protein is Probable 2-(5''-triphosphoribosyl)-3'-dephosphocoenzyme-A synthase.